The primary structure comprises 226 residues: PKHD-type hydroxylase AZC_3753 (226 aa).

The 101-residue stretch at 78–178 (RILPPMFNRY…RVASFFWTQS (101 aa)) folds into the Fe2OG dioxygenase domain. The Fe cation site is built by H96, D98, and H159. R169 contributes to the 2-oxoglutarate binding site.

Fe(2+) is required as a cofactor. Requires L-ascorbate as cofactor.

The polypeptide is PKHD-type hydroxylase AZC_3753 (Azorhizobium caulinodans (strain ATCC 43989 / DSM 5975 / JCM 20966 / LMG 6465 / NBRC 14845 / NCIMB 13405 / ORS 571)).